The following is a 173-amino-acid chain: MMCYDNSEMLSRQIDVMANDKPLMLTSPKQRQGGYFEQLACEFLQEQGLILIAKNWQRPKVGELDLVMLEKGQAWSTLVFIEVRQRNRSHFGDAALSVTAGKQRKIIKVARYFLHQHQKYSDYECRFDVIAYNTSNNKNSENETDIRLDNQLNQPLEKDQPEWLQGAFIASAW.

It belongs to the UPF0102 family.

The polypeptide is UPF0102 protein Psyc_1908 (Psychrobacter arcticus (strain DSM 17307 / VKM B-2377 / 273-4)).